A 300-amino-acid chain; its full sequence is Spermine synthase SPE4 (300 aa).

Serine 5 bears the Phosphoserine mark. A PABS domain is found at 12–255; the sequence is DGWFREINDK…GQLGLIVCSN (244 aa). Residues glutamine 44, aspartate 99, glutamate 119, and 151–152 contribute to the S-adenosyl 3-(methylsulfanyl)propylamine site; that span reads DG. The Proton acceptor role is filled by aspartate 174. A spermidine-binding site is contributed by aspartate 177.

It belongs to the spermidine/spermine synthase family.

It carries out the reaction S-adenosyl 3-(methylsulfanyl)propylamine + spermidine = spermine + S-methyl-5'-thioadenosine + H(+). It functions in the pathway amine and polyamine biosynthesis; spermine biosynthesis; spermine from spermidine: step 1/1. This Saccharomyces cerevisiae (strain ATCC 204508 / S288c) (Baker's yeast) protein is Spermine synthase SPE4 (SPE4).